The primary structure comprises 493 residues: 1-aminocyclopropane-1-carboxylate synthase CMW33 (493 aa).

At lysine 279 the chain carries N6-(pyridoxal phosphate)lysine.

This sequence belongs to the class-I pyridoxal-phosphate-dependent aminotransferase family. Homodimer. It depends on pyridoxal 5'-phosphate as a cofactor.

It carries out the reaction S-adenosyl-L-methionine = 1-aminocyclopropane-1-carboxylate + S-methyl-5'-thioadenosine + H(+). Its pathway is alkene biosynthesis; ethylene biosynthesis via S-adenosyl-L-methionine; ethylene from S-adenosyl-L-methionine: step 1/2. Its function is as follows. Catalyzes the formation of 1-aminocyclopropane-1-carboxylate, a direct precursor of ethylene in higher plants. The polypeptide is 1-aminocyclopropane-1-carboxylate synthase CMW33 (ACS1) (Cucurbita maxima (Pumpkin)).